The chain runs to 237 residues: Ribonuclease PH (237 aa).

Phosphate is bound by residues Arg86 and 124-126; that span reads GTR.

It belongs to the RNase PH family. In terms of assembly, homohexameric ring arranged as a trimer of dimers.

It catalyses the reaction tRNA(n+1) + phosphate = tRNA(n) + a ribonucleoside 5'-diphosphate. Its function is as follows. Phosphorolytic 3'-5' exoribonuclease that plays an important role in tRNA 3'-end maturation. Removes nucleotide residues following the 3'-CCA terminus of tRNAs; can also add nucleotides to the ends of RNA molecules by using nucleoside diphosphates as substrates, but this may not be physiologically important. Probably plays a role in initiation of 16S rRNA degradation (leading to ribosome degradation) during starvation. The polypeptide is Ribonuclease PH (Beijerinckia indica subsp. indica (strain ATCC 9039 / DSM 1715 / NCIMB 8712)).